Here is a 582-residue protein sequence, read N- to C-terminus: DBIRD complex subunit ZNF326 (582 aa).

The mediates transcriptional activation stretch occupies residues 1–124 (MDFEDDYTHS…YRNSLDSFGG (124 aa)). Residues Ser48, Ser56, Ser63, Ser69, Ser81, Ser82, Ser91, Ser106, Ser114, Ser118, Ser121, and Ser137 each carry the phosphoserine modification. Lys140 is covalently cross-linked (Glycyl lysine isopeptide (Lys-Gly) (interchain with G-Cter in SUMO2)). A disordered region spans residues 154-194 (YSSYSSFSSPHMKPAPVGSRGRGTPAYPESTFGSRNYDAFG). Omega-N-methylarginine is present on Arg173. Ser212 bears the Phosphoserine mark. The residue at position 235 (Arg235) is an Omega-N-methylarginine. The Bipartite nuclear localization signal signature appears at 238–260 (KRKMMQPFNKPSGTFIKKPKLAK). A Glycyl lysine isopeptide (Lys-Gly) (interchain with G-Cter in SUMO2) cross-link involves residue Lys240. The tract at residues 243 to 302 (QPFNKPSGTFIKKPKLAKPMEKISLSKSPTKTDPKNEEEEKRRIEARREKQRRRREKNSE) is disordered. Lys247 is subject to N6-acetyllysine; alternate. A Glycyl lysine isopeptide (Lys-Gly) (interchain with G-Cter in SUMO2); alternate cross-link involves residue Lys247. Position 249 is a phosphoserine (Ser249). A Phosphothreonine modification is found at Thr251. Glycyl lysine isopeptide (Lys-Gly) (interchain with G-Cter in SUMO2) cross-links involve residues Lys254 and Lys264. Position 270 is a phosphoserine (Ser270). The segment covering 272–290 (TKTDPKNEEEEKRRIEARR) has biased composition (basic and acidic residues). The C2H2 AKAP95-type 1 zinc-finger motif lies at 314 to 336 (CSFCKFRTFEEKDIELHLESSSH). Lys401 participates in a covalent cross-link: Glycyl lysine isopeptide (Lys-Gly) (interchain with G-Cter in SUMO2). A C2H2 AKAP95-type 2 zinc finger spans residues 407–430 (CSACSVYIPALHSSVQQHLKSPDH). Glycyl lysine isopeptide (Lys-Gly) (interchain with G-Cter in SUMO2) cross-links involve residues Lys459 and Lys467. The segment at 472–582 (FEIQDHSQDQ…DFPVEQPEEN (111 aa)) is disordered. The segment covering 483–523 (IEGDEEDEEKIDEPIEEEEDEDEEEEAEEVGEVEEVEEVEE) has biased composition (acidic residues). The segment covering 530–545 (EGEGNIQGVGEGGEVG) has biased composition (gly residues). Residues 552–567 (GVGEVEEVEELEEETA) show a composition bias toward acidic residues.

The protein belongs to the AKAP95 family. In terms of assembly, component of the DBIRD complex. Interacts with CCAR2; the interaction is direct.

It localises to the nucleus matrix. Core component of the DBIRD complex, a multiprotein complex that acts at the interface between core mRNP particles and RNA polymerase II (RNAPII) and integrates transcript elongation with the regulation of alternative splicing: the DBIRD complex affects local transcript elongation rates and alternative splicing of a large set of exons embedded in (A + T)-rich DNA regions. May play a role in neuronal differentiation and is able to bind DNA and activate expression in vitro. This is DBIRD complex subunit ZNF326 (ZNF326) from Homo sapiens (Human).